Consider the following 306-residue polypeptide: Lipoyl synthase (306 aa).

Residues Cys-55, Cys-60, Cys-66, Cys-81, Cys-85, Cys-88, and Ser-294 each contribute to the [4Fe-4S] cluster site. Positions 67–283 (WNHRTATFLL…RAYALARGFR (217 aa)) constitute a Radical SAM core domain.

Belongs to the radical SAM superfamily. Lipoyl synthase family. It depends on [4Fe-4S] cluster as a cofactor.

The protein resides in the cytoplasm. The catalysed reaction is [[Fe-S] cluster scaffold protein carrying a second [4Fe-4S](2+) cluster] + N(6)-octanoyl-L-lysyl-[protein] + 2 oxidized [2Fe-2S]-[ferredoxin] + 2 S-adenosyl-L-methionine + 4 H(+) = [[Fe-S] cluster scaffold protein] + N(6)-[(R)-dihydrolipoyl]-L-lysyl-[protein] + 4 Fe(3+) + 2 hydrogen sulfide + 2 5'-deoxyadenosine + 2 L-methionine + 2 reduced [2Fe-2S]-[ferredoxin]. It participates in protein modification; protein lipoylation via endogenous pathway; protein N(6)-(lipoyl)lysine from octanoyl-[acyl-carrier-protein]: step 2/2. Catalyzes the radical-mediated insertion of two sulfur atoms into the C-6 and C-8 positions of the octanoyl moiety bound to the lipoyl domains of lipoate-dependent enzymes, thereby converting the octanoylated domains into lipoylated derivatives. The protein is Lipoyl synthase of Chloroflexus aggregans (strain MD-66 / DSM 9485).